Here is a 414-residue protein sequence, read N- to C-terminus: Succinylornithine transaminase (414 aa).

Lys-260 is subject to N6-(pyridoxal phosphate)lysine.

Belongs to the class-III pyridoxal-phosphate-dependent aminotransferase family. AstC subfamily. The cofactor is pyridoxal 5'-phosphate.

The enzyme catalyses N(2)-succinyl-L-ornithine + 2-oxoglutarate = N-succinyl-L-glutamate 5-semialdehyde + L-glutamate. It functions in the pathway amino-acid degradation; L-arginine degradation via AST pathway; L-glutamate and succinate from L-arginine: step 3/5. Its function is as follows. Catalyzes the transamination of N(2)-succinylornithine and alpha-ketoglutarate into N(2)-succinylglutamate semialdehyde and glutamate. Can also act as an acetylornithine aminotransferase. This Yersinia pseudotuberculosis serotype I (strain IP32953) protein is Succinylornithine transaminase.